Consider the following 243-residue polypeptide: 1-(5-phosphoribosyl)-5-[(5-phosphoribosylamino)methylideneamino] imidazole-4-carboxamide isomerase (243 aa).

Residue Asp8 is the Proton acceptor of the active site. Asp129 (proton donor) is an active-site residue.

It belongs to the HisA/HisF family.

The protein localises to the cytoplasm. It carries out the reaction 1-(5-phospho-beta-D-ribosyl)-5-[(5-phospho-beta-D-ribosylamino)methylideneamino]imidazole-4-carboxamide = 5-[(5-phospho-1-deoxy-D-ribulos-1-ylimino)methylamino]-1-(5-phospho-beta-D-ribosyl)imidazole-4-carboxamide. The protein operates within amino-acid biosynthesis; L-histidine biosynthesis; L-histidine from 5-phospho-alpha-D-ribose 1-diphosphate: step 4/9. In Syntrophotalea carbinolica (strain DSM 2380 / NBRC 103641 / GraBd1) (Pelobacter carbinolicus), this protein is 1-(5-phosphoribosyl)-5-[(5-phosphoribosylamino)methylideneamino] imidazole-4-carboxamide isomerase.